Reading from the N-terminus, the 252-residue chain is 3-dehydroquinate dehydratase (252 aa).

3-dehydroquinate contacts are provided by residues Ser-21, 46–48 (EWR), and Arg-82. His-143 serves as the catalytic Proton donor/acceptor. Catalysis depends on Lys-170, which acts as the Schiff-base intermediate with substrate. Arg-213, Ser-232, and Gln-236 together coordinate 3-dehydroquinate.

Belongs to the type-I 3-dehydroquinase family. Homodimer.

It carries out the reaction 3-dehydroquinate = 3-dehydroshikimate + H2O. Its pathway is metabolic intermediate biosynthesis; chorismate biosynthesis; chorismate from D-erythrose 4-phosphate and phosphoenolpyruvate: step 3/7. Its function is as follows. Involved in the third step of the chorismate pathway, which leads to the biosynthesis of aromatic amino acids. Catalyzes the cis-dehydration of 3-dehydroquinate (DHQ) and introduces the first double bond of the aromatic ring to yield 3-dehydroshikimate. The chain is 3-dehydroquinate dehydratase from Shigella sonnei (strain Ss046).